Reading from the N-terminus, the 110-residue chain is UPF0122 protein lmo1802 (110 aa).

Belongs to the UPF0122 family.

In terms of biological role, might take part in the signal recognition particle (SRP) pathway. This is inferred from the conservation of its genetic proximity to ftsY/ffh. May be a regulatory protein. In Listeria monocytogenes serovar 1/2a (strain ATCC BAA-679 / EGD-e), this protein is UPF0122 protein lmo1802.